Reading from the N-terminus, the 86-residue chain is Superoxide dismutase [Cu-Zn] (86 aa).

The disordered stretch occupies residues 1–26; that stretch reads AKEKGGKLTAGLAAGGHWNPNKAPHH. The span at 7 to 16 shows a compositional bias: low complexity; it reads KLTAGLAAGG. A Cu cation-binding site is contributed by His-17. Residues His-17, His-26, His-35, and Asp-38 each coordinate Zn(2+). His-73 contributes to the Cu cation binding site.

This sequence belongs to the Cu-Zn superoxide dismutase family. In terms of assembly, homodimer. Cu cation is required as a cofactor. Requires Zn(2+) as cofactor.

It localises to the periplasm. The enzyme catalyses 2 superoxide + 2 H(+) = H2O2 + O2. Functionally, destroys radicals which are normally produced within the cells and which are toxic to biological systems. The chain is Superoxide dismutase [Cu-Zn] (sodC) from Mannheimia haemolytica (Pasteurella haemolytica).